The chain runs to 173 residues: Shikimate kinase (173 aa).

10–15 provides a ligand contact to ATP; it reads GSGKTT. A Mg(2+)-binding site is contributed by Thr14. Positions 32, 56, and 78 each coordinate substrate. Arg117 lines the ATP pocket. Substrate is bound at residue Arg135.

The protein belongs to the shikimate kinase family. Monomer. Mg(2+) is required as a cofactor.

It localises to the cytoplasm. It catalyses the reaction shikimate + ATP = 3-phosphoshikimate + ADP + H(+). It functions in the pathway metabolic intermediate biosynthesis; chorismate biosynthesis; chorismate from D-erythrose 4-phosphate and phosphoenolpyruvate: step 5/7. In terms of biological role, catalyzes the specific phosphorylation of the 3-hydroxyl group of shikimic acid using ATP as a cosubstrate. The chain is Shikimate kinase from Limosilactobacillus fermentum (strain NBRC 3956 / LMG 18251) (Lactobacillus fermentum).